A 95-amino-acid polypeptide reads, in one-letter code: Co-chaperonin GroES (95 aa).

The protein belongs to the GroES chaperonin family. In terms of assembly, heptamer of 7 subunits arranged in a ring. Interacts with the chaperonin GroEL.

The protein resides in the cytoplasm. Together with the chaperonin GroEL, plays an essential role in assisting protein folding. The GroEL-GroES system forms a nano-cage that allows encapsulation of the non-native substrate proteins and provides a physical environment optimized to promote and accelerate protein folding. GroES binds to the apical surface of the GroEL ring, thereby capping the opening of the GroEL channel. The polypeptide is Co-chaperonin GroES (Rickettsia conorii (strain ATCC VR-613 / Malish 7)).